Consider the following 317-residue polypeptide: Transaldolase (317 aa).

K126 functions as the Schiff-base intermediate with substrate in the catalytic mechanism.

It belongs to the transaldolase family. Type 1 subfamily. In terms of assembly, homodimer.

It localises to the cytoplasm. The enzyme catalyses D-sedoheptulose 7-phosphate + D-glyceraldehyde 3-phosphate = D-erythrose 4-phosphate + beta-D-fructose 6-phosphate. The protein operates within carbohydrate degradation; pentose phosphate pathway; D-glyceraldehyde 3-phosphate and beta-D-fructose 6-phosphate from D-ribose 5-phosphate and D-xylulose 5-phosphate (non-oxidative stage): step 2/3. In terms of biological role, transaldolase is important for the balance of metabolites in the pentose-phosphate pathway. The protein is Transaldolase of Burkholderia orbicola (strain AU 1054).